An 825-amino-acid polypeptide reads, in one-letter code: Taste receptor cell protein 1 (825 aa).

Positions M1 to A21 are cleaved as a signal peptide. Disordered regions lie at residues E66 to G97 and T299 to P322. A compositionally biased stretch (low complexity) spans S302–P322.

As to expression, expression is restricted to circumvallate papillae.

The chain is Taste receptor cell protein 1 (Trcg1) from Mus musculus (Mouse).